Consider the following 220-residue polypeptide: Large ribosomal subunit protein uL3 (220 aa).

Positions 113–143 are disordered; sequence GTTKGHGYQGNIHKDGQRRGPMAHGSRYHRR.

The protein belongs to the universal ribosomal protein uL3 family. Part of the 50S ribosomal subunit. Forms a cluster with proteins L14 and L19.

Functionally, one of the primary rRNA binding proteins, it binds directly near the 3'-end of the 23S rRNA, where it nucleates assembly of the 50S subunit. The protein is Large ribosomal subunit protein uL3 of Limosilactobacillus fermentum (strain NBRC 3956 / LMG 18251) (Lactobacillus fermentum).